A 139-amino-acid polypeptide reads, in one-letter code: NADH-quinone oxidoreductase subunit A (139 aa).

3 helical membrane-spanning segments follow: residues 11 to 31, 70 to 90, and 97 to 117; these read LWPLLLYFELVLVVVGTMLAL, LIAIFFVIFDLEAVFIFAWAI, and WPGYIEILIFIGVLVATLVYL.

It belongs to the complex I subunit 3 family. In terms of assembly, NDH-1 is composed of 14 different subunits. Subunits NuoA, H, J, K, L, M, N constitute the membrane sector of the complex.

Its subcellular location is the cell inner membrane. The enzyme catalyses a quinone + NADH + 5 H(+)(in) = a quinol + NAD(+) + 4 H(+)(out). In terms of biological role, NDH-1 shuttles electrons from NADH, via FMN and iron-sulfur (Fe-S) centers, to quinones in the respiratory chain. The immediate electron acceptor for the enzyme in this species is believed to be ubiquinone. Couples the redox reaction to proton translocation (for every two electrons transferred, four hydrogen ions are translocated across the cytoplasmic membrane), and thus conserves the redox energy in a proton gradient. The polypeptide is NADH-quinone oxidoreductase subunit A (Methylococcus capsulatus (strain ATCC 33009 / NCIMB 11132 / Bath)).